The following is a 330-amino-acid chain: MSDRWYVGVDVGGTTIKMAFLTTAGEIVDKWEIPTNKQDGGALITTNIADALDKRLSGHHKSKSDLIGIGLGAPGFIEMDTGFIYHAVNIGWRDFPLKDKLEEETKLPVIVDNDANIAALGEMWKGAGDGAKNMLLITLGTGVGGGIVANGNILHGVNGMAGEIGHITVIPEGGAPCNCGKTGCLETVASATGIARIATEGVTEHKESQLALDYDKHGVLTAKDVFSAADASDAFALSVVDHIAYYLGFAIANLANALNPEKIVIGGGVSKAGDTLLKPIKQHFEAYALPRVADGAEFRIATLGNDAGVIGGGWLVKQQENSMEKGNETE.

It belongs to the ROK (NagC/XylR) family.

The protein resides in the cytoplasm. It carries out the reaction D-glucose + ATP = D-glucose 6-phosphate + ADP + H(+). This is Glucokinase (glcK) from Halalkalibacterium halodurans (strain ATCC BAA-125 / DSM 18197 / FERM 7344 / JCM 9153 / C-125) (Bacillus halodurans).